Consider the following 370-residue polypeptide: tRNA-specific 2-thiouridylase MnmA (370 aa).

ATP-binding positions include 9–16 (GMSGGVDS) and Met35. The interval 95–97 (NPD) is interaction with target base in tRNA. Residue Cys100 is the Nucleophile of the active site. Cys100 and Cys196 are joined by a disulfide. Gly124 lines the ATP pocket. An interaction with tRNA region spans residues 146 to 148 (KDQ). Cys196 (cysteine persulfide intermediate) is an active-site residue. The interaction with tRNA stretch occupies residues 308-309 (RY).

This sequence belongs to the MnmA/TRMU family.

It localises to the cytoplasm. The enzyme catalyses S-sulfanyl-L-cysteinyl-[protein] + uridine(34) in tRNA + AH2 + ATP = 2-thiouridine(34) in tRNA + L-cysteinyl-[protein] + A + AMP + diphosphate + H(+). Its function is as follows. Catalyzes the 2-thiolation of uridine at the wobble position (U34) of tRNA, leading to the formation of s(2)U34. This chain is tRNA-specific 2-thiouridylase MnmA, found in Ralstonia pickettii (strain 12J).